A 452-amino-acid polypeptide reads, in one-letter code: Friend leukemia integration 1 transcription factor (452 aa).

A Phosphoserine modification is found at Ser39. In terms of domain architecture, PNT spans 112 to 198 (PPPPNMTTNE…SHLSYLRESS (87 aa)). A disordered region spans residues 209–271 (DQSSRLSVKE…PYQILGPTSS (63 aa)). A compositionally biased stretch (basic and acidic residues) spans 215–226 (SVKEDPSYDSVR). Residues 248 to 257 (QTISKNTEQR) show a composition bias toward polar residues. A DNA-binding region (ETS) is located at residues 281 to 361 (IQLWQFLLEL…HGKRYAYKFD (81 aa)). The disordered stretch occupies residues 433-452 (NPNVPRHPNTHVPSHLGSYY).

This sequence belongs to the ETS family. Can form homodimers or heterodimers with ETV6/TEL1.

The protein resides in the nucleus. Its function is as follows. Sequence-specific transcriptional activator. Recognizes the DNA sequence 5'-C[CA]GGAAGT-3'. The chain is Friend leukemia integration 1 transcription factor (FLI1) from Homo sapiens (Human).